Reading from the N-terminus, the 1013-residue chain is Dichlorochromopyrrolate synthase (1013 aa).

Belongs to the RebD family. In terms of assembly, homodimer. The cofactor is heme.

The enzyme catalyses 2 3-(7-chloroindol-3-yl)-2-iminopropanoate + H2O2 = dichlorochromopyrrolate + NH4(+) + 2 H2O + H(+). The catalysed reaction is 2 2-iminio-3-(indol-3-yl)propanoate + H2O2 = chromopyrrolate + NH4(+) + 2 H2O + H(+). It catalyses the reaction 2 H2O2 = O2 + 2 H2O. Involved in the biosynthesis of the indolocarbazole antitumor agent rebeccamycin. Catalyzes the hydrogen peroxide-dependent dimerization of two L-tryptophan-derived molecules (imine form of indole 3-pyruvate (IPA)), to form dichlorochromopyrrolic acid (CPA), the precursor for the six-ring bisindolopyrrolocarbazole scaffold of the rebeccamycin. The hydrogen peroxide is provided together with iminoindolpropanoate by RebO. Due to the instability of indole 3-pyruvate (IPA), which is hydrolyzed in solution and exits in equilibrium with the predominant ketone form of IPA, the concerted functioning of the RebO/RebD system appears to prevent the buildup of significant amounts of IPA and its imine in solution, effectively shepherding the imine further down the biosynthetic chain. The polypeptide is Dichlorochromopyrrolate synthase (rebD) (Lentzea aerocolonigenes (Lechevalieria aerocolonigenes)).